A 115-amino-acid chain; its full sequence is Pro-neuregulin-4, membrane-bound isoform (115 aa).

The Extracellular portion of the chain corresponds to 1 to 62 (MPTDHEEPCG…SSIQTKSNLF (62 aa)). An EGF-like domain is found at 5–46 (HEEPCGPSHKSFCLNGGLCYVIPTIPSPFCRCVENYTGARCE). 3 disulfides stabilise this stretch: cysteine 9–cysteine 23, cysteine 17–cysteine 34, and cysteine 36–cysteine 45. An N-linked (GlcNAc...) asparagine glycan is attached at asparagine 39. Residues 63 to 83 (EAFVALAVLVTLIIGAFYFLC) form a helical membrane-spanning segment. At 84–115 (RKGHFQRASSVQYDINLVETSSTSAHHSHEQH) the chain is on the cytoplasmic side.

It belongs to the neuregulin family. Interacts with ERBB4. Post-translationally, proteolytic cleavage close to the plasma membrane on the external face leads to the release of the soluble growth factor form. Extensive glycosylation precedes the proteolytic cleavage.

It is found in the cell membrane. The protein resides in the secreted. In terms of biological role, low affinity ligand for the ERBB4 tyrosine kinase receptor. Concomitantly recruits ERBB1 and ERBB2 coreceptors, resulting in ligand-stimulated tyrosine phosphorylation and activation of the ERBB receptors. Does not bind to the ERBB1, ERBB2 and ERBB3 receptors. The protein is Pro-neuregulin-4, membrane-bound isoform (NRG4) of Homo sapiens (Human).